Reading from the N-terminus, the 236-residue chain is Small ribosomal subunit protein uS2c (236 aa).

It belongs to the universal ribosomal protein uS2 family.

It is found in the plastid. The protein localises to the chloroplast. This is Small ribosomal subunit protein uS2c (rps2) from Physcomitrium patens (Spreading-leaved earth moss).